Here is a 458-residue protein sequence, read N- to C-terminus: Methylenetetrahydrofolate--tRNA-(uracil-5-)-methyltransferase TrmFO (458 aa).

11–16 (GGGMAG) is a binding site for FAD.

Belongs to the MnmG family. TrmFO subfamily. The cofactor is FAD.

It localises to the cytoplasm. It carries out the reaction uridine(54) in tRNA + (6R)-5,10-methylene-5,6,7,8-tetrahydrofolate + NADH + H(+) = 5-methyluridine(54) in tRNA + (6S)-5,6,7,8-tetrahydrofolate + NAD(+). It catalyses the reaction uridine(54) in tRNA + (6R)-5,10-methylene-5,6,7,8-tetrahydrofolate + NADPH + H(+) = 5-methyluridine(54) in tRNA + (6S)-5,6,7,8-tetrahydrofolate + NADP(+). Its function is as follows. Catalyzes the folate-dependent formation of 5-methyl-uridine at position 54 (M-5-U54) in all tRNAs. This chain is Methylenetetrahydrofolate--tRNA-(uracil-5-)-methyltransferase TrmFO, found in Jannaschia sp. (strain CCS1).